The primary structure comprises 38 residues: Photosystem II reaction center protein L (38 aa).

A helical transmembrane segment spans residues 17-37 (SLFWGLLLIFVLAVLFSSYFF).

The protein belongs to the PsbL family. PSII is composed of 1 copy each of membrane proteins PsbA, PsbB, PsbC, PsbD, PsbE, PsbF, PsbH, PsbI, PsbJ, PsbK, PsbL, PsbM, PsbT, PsbX, PsbY, PsbZ, Psb30/Ycf12, at least 3 peripheral proteins of the oxygen-evolving complex and a large number of cofactors. It forms dimeric complexes.

The protein resides in the plastid. It localises to the chloroplast thylakoid membrane. In terms of biological role, one of the components of the core complex of photosystem II (PSII). PSII is a light-driven water:plastoquinone oxidoreductase that uses light energy to abstract electrons from H(2)O, generating O(2) and a proton gradient subsequently used for ATP formation. It consists of a core antenna complex that captures photons, and an electron transfer chain that converts photonic excitation into a charge separation. This subunit is found at the monomer-monomer interface and is required for correct PSII assembly and/or dimerization. The protein is Photosystem II reaction center protein L of Rhodomonas salina (Cryptomonas salina).